The sequence spans 326 residues: Protein-ribulosamine 3-kinase, chloroplastic (326 aa).

A chloroplast-targeting transit peptide spans 1–30 (MAVASLSICFSARPHLLLRNFSPRPKFVAM). Residue 125–127 (EFI) participates in ATP binding. The active-site Proton acceptor is the Asp230.

The protein belongs to the fructosamine kinase family.

It is found in the plastid. The protein resides in the chloroplast. The catalysed reaction is N(6)-D-ribulosyl-L-lysyl-[protein] + ATP = N(6)-(3-O-phospho-D-ribulosyl)-L-lysyl-[protein] + ADP + H(+). It carries out the reaction N(6)-(D-erythrulosyl)-L-lysyl-[protein] + ATP = N(6)-(3-O-phospho-D-erythrulosyl)-L-lysyl-[protein] + ADP + H(+). Initiates a process leading to the deglycation of proteins. Phosphorylates low-molecular-mass and protein-bound erythrulosamines and ribulosamines, but not fructosamines or psicosamines, on the third carbon of the sugar moiety. Protein-bound erythrulosamine 3-phosphates and ribulosamine 3-phosphates are unstable and decompose under physiological conditions. The sequence is that of Protein-ribulosamine 3-kinase, chloroplastic from Arabidopsis thaliana (Mouse-ear cress).